Here is a 584-residue protein sequence, read N- to C-terminus: Myo-inositol transporter 1 (584 aa).

At 1–81 the chain is on the cytoplasmic side; sequence MGIHIPYLTS…TSVMITFNQS (81 aa). Thr-12 bears the Phosphothreonine mark. The segment at 13 to 42 is disordered; it reads SQSNVGDAVGNADSVEFNSEHDSPSKRGKI. Phosphoserine occurs at positions 26, 31, 35, 37, and 46. Positions 30–42 are enriched in basic and acidic residues; the sequence is NSEHDSPSKRGKI. The chain crosses the membrane as a helical span at residues 82-102; it reads LSPFIITLTFVASISGFMFGY. Residues 103–129 are Extracellular-facing; it reads DTGYISSALISIGTDLDHKVLTYGEKE. The chain crosses the membrane as a helical span at residues 130-150; the sequence is IVTAATSLGALITSIFAGTAA. Residues 151-163 lie on the Cytoplasmic side of the membrane; that stretch reads DIFGRKRCLMGSN. The helical transmembrane segment at 164–184 threads the bilayer; that stretch reads LMFVIGAILQVSAHTFWQMAV. Residues 185 to 186 are Extracellular-facing; the sequence is GR. The chain crosses the membrane as a helical span at residues 187 to 207; that stretch reads LIMGFGVGIGSLIAPLFISEI. Residues 208–215 lie on the Cytoplasmic side of the membrane; the sequence is APKMIRGR. A helical transmembrane segment spans residues 216–236; sequence LTVINSLWLTGGQLVAYGCGA. Over 237–246 the chain is Extracellular; the sequence is GLNYVNNGWR. The chain crosses the membrane as a helical span at residues 247–267; the sequence is ILVGLSLIPTAVQFTCLCFLP. At 268–349 the chain is on the cytoplasmic side; sequence DTPRYYVMKG…IGCGLQAIQQ (82 aa). Residues 350-370 traverse the membrane as a helical segment; the sequence is FTGWNSLMYFSGTIFETVGFK. The N-linked (GlcNAc...) asparagine glycan is linked to Asn-371. Topologically, residues 371 to 376 are extracellular; the sequence is NSSAVS. Residues 377-397 form a helical membrane-spanning segment; it reads IIVSGTNFIFTLVAFFSIDKI. Over 398–400 the chain is Cytoplasmic; sequence GRR. The helical transmembrane segment at 401 to 421 threads the bilayer; that stretch reads TILLIGLPGMTMALVVCSIAF. At 422-441 the chain is on the extracellular side; the sequence is HFLGIKFDGAVAVVVSSGFS. A helical membrane pass occupies residues 442–462; that stretch reads SWGIVIIVFIIVFAAFYALGI. Residues 463–486 are Cytoplasmic-facing; it reads GTVPWQQSELFPQNVRGIGTSYAT. Residues 487–507 traverse the membrane as a helical segment; sequence ATNWAGSLVIASTFLTMLQNI. Topologically, residues 508 to 510 are extracellular; that stretch reads TPA. The helical transmembrane segment at 511–531 threads the bilayer; sequence GTFAFFAGLSCLSTIFCYFCY. Topologically, residues 532–584 are cytoplasmic; the sequence is PELSGLELEEVQTILKDGFNIKASKALAKKRKQQVARVHELKYEPTQEIIEDI. Lys-573 is covalently cross-linked (Glycyl lysine isopeptide (Lys-Gly) (interchain with G-Cter in ubiquitin)).

It belongs to the major facilitator superfamily. Sugar transporter (TC 2.A.1.1) family.

It is found in the cell membrane. The catalysed reaction is myo-inositol(out) + H(+)(out) = myo-inositol(in) + H(+)(in). Functionally, major transporter for myo-inositol. This is Myo-inositol transporter 1 (ITR1) from Saccharomyces cerevisiae (strain ATCC 204508 / S288c) (Baker's yeast).